The sequence spans 37 residues: MGQVEKARQGQFARPHHSDSQRRVRAWSRIQRRARSF.

The tract at residues 1–37 (MGQVEKARQGQFARPHHSDSQRRVRAWSRIQRRARSF) is disordered. Positions 23–37 (RVRAWSRIQRRARSF) are enriched in basic residues.

This is an uncharacterized protein from Bacillus phage phi105 (Bacteriophage phi-105).